We begin with the raw amino-acid sequence, 61 residues long: Small ribosomal subunit protein uS14 (61 aa).

Residues C24, C27, C40, and C43 each coordinate Zn(2+).

The protein belongs to the universal ribosomal protein uS14 family. Zinc-binding uS14 subfamily. As to quaternary structure, part of the 30S ribosomal subunit. Contacts proteins S3 and S10. The cofactor is Zn(2+).

Binds 16S rRNA, required for the assembly of 30S particles and may also be responsible for determining the conformation of the 16S rRNA at the A site. The protein is Small ribosomal subunit protein uS14 of Frankia alni (strain DSM 45986 / CECT 9034 / ACN14a).